The chain runs to 468 residues: MSSGKIAQVVGPVVDVAFATGDKLPEINNALVVYTDEEKSRRIVLEVALELGEGVVRTIAMESTDGLTRGLEVLDTGRPISVPVGKETLGRVFNVLGDTIDMEAPFADDAEREPIHKKAPTFDELSTSTEILETGIKVIDLLAPYLKGGKVGLFGGAGVGKTVLIQELIHNIAQEHGGISVFTGVGERSREGNDLYWEMKESGVIEKTAMVFGQMNEPPGARMRVALTGLTIAEYFRDVEGQDVLLFIDNIFRFTQAGSEVSALLGRMPSAVGYQPTLATEMGQLQERITSTKKGSVTSIQAIYVPADDYTDPAPATAFAHLDSTTNLERKLTQMGIYPAVDPLASSSRALSPEIVGEEHYAVATEVQRVLQRYRELQDIIAILGMDELSDEDKTLVARARRIQFFLSQNFNVAEQFTGQPGSYVPVAETVRGFKEILEGKYDNLPEDAFRSVGPIEDVVAKAKAMGY.

155–162 lines the ATP pocket; sequence GGAGVGKT.

This sequence belongs to the ATPase alpha/beta chains family. In terms of assembly, F-type ATPases have 2 components, CF(1) - the catalytic core - and CF(0) - the membrane proton channel. CF(1) has five subunits: alpha(3), beta(3), gamma(1), delta(1), epsilon(1). CF(0) has three main subunits: a(1), b(2) and c(9-12). The alpha and beta chains form an alternating ring which encloses part of the gamma chain. CF(1) is attached to CF(0) by a central stalk formed by the gamma and epsilon chains, while a peripheral stalk is formed by the delta and b chains.

It is found in the cell membrane. It catalyses the reaction ATP + H2O + 4 H(+)(in) = ADP + phosphate + 5 H(+)(out). In terms of biological role, produces ATP from ADP in the presence of a proton gradient across the membrane. The catalytic sites are hosted primarily by the beta subunits. The polypeptide is ATP synthase subunit beta (Streptococcus thermophilus (strain ATCC BAA-250 / LMG 18311)).